Reading from the N-terminus, the 286-residue chain is PTS system mannose-specific EIID component (286 aa).

Position 1 is an N-formylmethionine (methionine 1). Over 1–17 (MSEMVDTTQTTTEKKLT) the chain is Cytoplasmic. The 271-residue stretch at 14 to 284 (KKLTQSDIRG…GIAGYACGLL (271 aa)) folds into the PTS EIID domain. The stretch at 18–55 (QSDIRGVFLRSNLFQGSWNFERMQALGFCFSMVPAIRR) is an intramembrane region. The Cytoplasmic portion of the chain corresponds to 56–62 (LYPENNE). The stretch at 63–95 (ARKQAIRRHLEFFNTQPFVAAPILGVTLALEEQ) is an intramembrane region. Residues 96-103 (RANGAEID) are Cytoplasmic-facing. At 104–143 (DGAINGIKVGLMGPLAGVGDPIFWGTVRPVFAALGAGIAM) the chain is embedded in the membrane. The Periplasmic portion of the chain corresponds to 144 to 147 (SGSL). The segment at 148 to 176 (LGPLLFFILFNLVRLATRYYGVAYGYSKG) is a transmembrane helix. The Cytoplasmic portion of the chain corresponds to 177-186 (IDIVKDMGGG). The chain crosses the lipid bilayer at residues 187–212 (FLQKLTEGASILGLFVMGALVNKWTH). At 213-244 (VNIPLVVSRITDQTGKEHVTTVQTILDQLMPG) the chain is on the periplasmic side. The segment at 245-258 (LVPLLLTFACMWLL) is a transmembrane helix. Residues 259–264 (RKKVNP) are Cytoplasmic-facing. Residues 265-283 (LWIIVGFFVIGIAGYACGL) are membrane-embedded. Residues 284-286 (LGL) lie on the Periplasmic side of the membrane.

In terms of assembly, homotrimer of protomers that are composed of two subunits, IIC and IID.

The protein localises to the cell inner membrane. The phosphoenolpyruvate-dependent sugar phosphotransferase system (sugar PTS), a major carbohydrate active transport system, catalyzes the phosphorylation of incoming sugar substrates concomitantly with their translocation across the cell membrane. The enzyme II ManXYZ PTS system is involved in mannose transport. The sequence is that of PTS system mannose-specific EIID component (manZ) from Escherichia coli O6:H1 (strain CFT073 / ATCC 700928 / UPEC).